Here is a 363-residue protein sequence, read N- to C-terminus: MNYEFEREIGFINSQPSLAECLTSFPPVGDTFQSSSIKNSTLSHSTVIPPPFEQTIPSLNPSSHPRQSRPKQSPNGTSPLPAATLPPEYPWMKEKKNSKKNHLPASSGPAASCLSQKETHEIPDNTGGGSRRLRTAYTNTQLLELEKEFHFNKYLCRPRRVEIAALLDLTERQVKVWFQNRRMKHKRQTQCKENQNGDGKFKNLEDSGQTEDDEEKSLFEQGINNVTGALLDREGYTFQSNALTQQQAQNLHNGESQSFPVSPLPSNEKNLKHFHQQSPTVQNCLSTMAQNCAAGLNNDSPEALDVPSLQDFNVFSTESCLQLSDGVSPSLPGSLDSPVDLSADSFDFFTDTLTTIDLQHLNY.

Disordered stretches follow at residues 23–133 (TSFP…SRRL) and 183–216 (MKHK…DEEK). 2 stretches are compositionally biased toward polar residues: residues 31–46 (TFQS…SHST) and 55–78 (TIPS…NGTS). The Antp-type hexapeptide signature appears at 88–93 (EYPWMK). Positions 130–189 (SRRLRTAYTNTQLLELEKEFHFNKYLCRPRRVEIAALLDLTERQVKVWFQNRRMKHKRQT) form a DNA-binding region, homeobox.

This sequence belongs to the Antp homeobox family. Proboscipedia subfamily.

Its subcellular location is the nucleus. In terms of biological role, sequence-specific transcription factor which is part of a developmental regulatory system that provides cells with specific positional identities on the anterior-posterior axis. The sequence is that of Homeobox protein Hox-A2 (HOXA2) from Heterodontus francisci (Horn shark).